A 42-amino-acid polypeptide reads, in one-letter code: Cytochrome b559 subunit beta (42 aa).

The chain crosses the membrane as a helical span at residues Trp17–Ala33. His21 contacts heme.

The protein belongs to the PsbE/PsbF family. As to quaternary structure, heterodimer of an alpha subunit and a beta subunit. PSII is composed of 1 copy each of membrane proteins PsbA, PsbB, PsbC, PsbD, PsbE, PsbF, PsbH, PsbI, PsbJ, PsbK, PsbL, PsbM, PsbT, PsbX, PsbY, PsbZ, Psb30/Ycf12, at least 3 peripheral proteins of the oxygen-evolving complex and a large number of cofactors. It forms dimeric complexes. The cofactor is heme b.

Its subcellular location is the plastid. The protein localises to the chloroplast thylakoid membrane. In terms of biological role, this b-type cytochrome is tightly associated with the reaction center of photosystem II (PSII). PSII is a light-driven water:plastoquinone oxidoreductase that uses light energy to abstract electrons from H(2)O, generating O(2) and a proton gradient subsequently used for ATP formation. It consists of a core antenna complex that captures photons, and an electron transfer chain that converts photonic excitation into a charge separation. In Guillardia theta (Cryptophyte), this protein is Cytochrome b559 subunit beta.